A 409-amino-acid chain; its full sequence is Tryptophan synthase beta chain (409 aa).

An N6-(pyridoxal phosphate)lysine modification is found at Lys-95.

It belongs to the TrpB family. In terms of assembly, tetramer of two alpha and two beta chains. Pyridoxal 5'-phosphate is required as a cofactor.

It carries out the reaction (1S,2R)-1-C-(indol-3-yl)glycerol 3-phosphate + L-serine = D-glyceraldehyde 3-phosphate + L-tryptophan + H2O. It participates in amino-acid biosynthesis; L-tryptophan biosynthesis; L-tryptophan from chorismate: step 5/5. Its function is as follows. The beta subunit is responsible for the synthesis of L-tryptophan from indole and L-serine. This chain is Tryptophan synthase beta chain, found in Pseudomonas savastanoi pv. phaseolicola (Pseudomonas syringae pv. phaseolicola).